A 791-amino-acid polypeptide reads, in one-letter code: Outer membrane protein assembly factor BamA (791 aa).

POTRA domains are found at residues 59 to 130 (NAIA…VTEK), 131 to 209 (PRID…VEEG), 212 to 298 (LYIK…VKEG), 301 to 383 (YKLG…IRKR), and 386 to 459 (VYIN…VKEQ).

The protein belongs to the BamA family. Part of the Bam complex.

The protein localises to the cell outer membrane. Part of the outer membrane protein assembly complex, which is involved in assembly and insertion of beta-barrel proteins into the outer membrane. This chain is Outer membrane protein assembly factor BamA, found in Nitratidesulfovibrio vulgaris (strain ATCC 29579 / DSM 644 / CCUG 34227 / NCIMB 8303 / VKM B-1760 / Hildenborough) (Desulfovibrio vulgaris).